The primary structure comprises 203 residues: Ribonuclease HII (203 aa).

Residues 15 to 201 form the RNase H type-2 domain; sequence LLVAGLDEAG…VAQAPLRFPE (187 aa). 3 residues coordinate a divalent metal cation: aspartate 21, glutamate 22, and aspartate 111.

The protein belongs to the RNase HII family. The cofactor is Mn(2+). It depends on Mg(2+) as a cofactor.

It localises to the cytoplasm. The catalysed reaction is Endonucleolytic cleavage to 5'-phosphomonoester.. Functionally, endonuclease that specifically degrades the RNA of RNA-DNA hybrids. The sequence is that of Ribonuclease HII from Thermus thermophilus (strain ATCC 27634 / DSM 579 / HB8).